A 77-amino-acid polypeptide reads, in one-letter code: U14-theraphotoxin-Cg1c (77 aa).

The signal sequence occupies residues 1–21 (MNTSDPPAVLRIAAITLLCTA). Residues 22-49 (SESVEQNPLIPFENAVLGSYAKMASEKR) constitute a propeptide that is removed on maturation. 2 disulfides stabilise this stretch: C50–C64 and C57–C69.

This sequence belongs to the neurotoxin 10 (Hwtx-1) family. 65 (Jztx-21) subfamily. As to expression, expressed by the venom gland.

It is found in the secreted. Probable ion channel inhibitor. The chain is U14-theraphotoxin-Cg1c from Chilobrachys guangxiensis (Chinese earth tiger tarantula).